The chain runs to 276 residues: Diaminopimelate epimerase (276 aa).

Substrate-binding residues include N13, Q46, and N66. C75 functions as the Proton donor in the catalytic mechanism. Substrate contacts are provided by residues 76-77 (GN), N159, N192, and 210-211 (ER). C219 acts as the Proton acceptor in catalysis. Substrate is bound at residue 220–221 (GT).

It belongs to the diaminopimelate epimerase family. As to quaternary structure, homodimer.

The protein resides in the cytoplasm. The enzyme catalyses (2S,6S)-2,6-diaminopimelate = meso-2,6-diaminopimelate. It participates in amino-acid biosynthesis; L-lysine biosynthesis via DAP pathway; DL-2,6-diaminopimelate from LL-2,6-diaminopimelate: step 1/1. Functionally, catalyzes the stereoinversion of LL-2,6-diaminopimelate (L,L-DAP) to meso-diaminopimelate (meso-DAP), a precursor of L-lysine and an essential component of the bacterial peptidoglycan. This Azotobacter vinelandii (strain DJ / ATCC BAA-1303) protein is Diaminopimelate epimerase.